The chain runs to 100 residues: UPF0251 protein swp_0615 (100 aa).

The protein belongs to the UPF0251 family.

In Shewanella piezotolerans (strain WP3 / JCM 13877), this protein is UPF0251 protein swp_0615.